The primary structure comprises 189 residues: Small ribosomal subunit protein uS4 (189 aa).

An S4 RNA-binding domain is found at 107–178 (RRLQTQVFKL…AGRVKRKNQG (72 aa)). Residues 160–189 (HNSPYGGGRAGRVKRKNQGKGGEEGAEEEE) are disordered.

The protein belongs to the universal ribosomal protein uS4 family. Component of the small ribosomal subunit. Mature ribosomes consist of a small (40S) and a large (60S) subunit. The 40S subunit contains about 32 different proteins and 1 molecule of RNA (18S). The 60S subunit contains 45 different proteins and 3 molecules of RNA (25S, 5.8S and 5S).

It is found in the cytoplasm. Functionally, component of the ribosome, a large ribonucleoprotein complex responsible for the synthesis of proteins in the cell. The small ribosomal subunit (SSU) binds messenger RNAs (mRNAs) and translates the encoded message by selecting cognate aminoacyl-transfer RNA (tRNA) molecules. The large subunit (LSU) contains the ribosomal catalytic site termed the peptidyl transferase center (PTC), which catalyzes the formation of peptide bonds, thereby polymerizing the amino acids delivered by tRNAs into a polypeptide chain. The nascent polypeptides leave the ribosome through a tunnel in the LSU and interact with protein factors that function in enzymatic processing, targeting, and the membrane insertion of nascent chains at the exit of the ribosomal tunnel. RPS9B is involved in nucleolar processing of pre-18S ribosomal RNA and ribosome assembly. In Candida albicans (strain SC5314 / ATCC MYA-2876) (Yeast), this protein is Small ribosomal subunit protein uS4 (RPS9B).